Consider the following 1006-residue polypeptide: Beta-galactosidase (1006 aa).

An N-terminal signal peptide occupies residues 1–19 (MKLSSACAIALLAAQAAGA). N-linked (GlcNAc...) asparagine glycosylation occurs at asparagine 156. The active-site Proton donor is glutamate 200. The active-site Nucleophile is the glutamate 298. N-linked (GlcNAc...) asparagine glycans are attached at residues asparagine 373, asparagine 402, asparagine 422, asparagine 478, asparagine 522, asparagine 622, asparagine 739, asparagine 760, asparagine 777, and asparagine 805.

Belongs to the glycosyl hydrolase 35 family.

The catalysed reaction is Hydrolysis of terminal non-reducing beta-D-galactose residues in beta-D-galactosides.. In terms of biological role, cleaves beta-linked terminal galactosyl residues from gangliosides, glycoproteins, and glycosaminoglycans. The protein is Beta-galactosidase (lacA) of Aspergillus niger.